The primary structure comprises 494 residues: MSTGTFVVSQPLNYRGGARVEPVDASGTEKAFEPASGRVIATFTCSGEKEVNLAVQDAKAAFKIWSQKSGMERCRILLEAARIIRERRDEIATMETINNGKSIFEARWDIDTSWQCLEYYAGLAGSMAGEHIQLPGGSFGYTRREPLGVCVGIGAWNYPFQIACWKSAPALACGNAMVFKPSPFTPVSVLLLAEIYTEAGVPPGLFNVVQGGAATGQFLCQHRDVAKVSFTGSVPTGSKIMEMSAKGIKPVTLELGGKSPLIIFSDCDMKNAVKGALMANFLTQGEVCCNGTRVFVQKEILDQFTEEVVKQTQRIKIGDPLLEDTRMGPLINRPHLERVLGFVKVAKEQGAKVLCGGDVFVPEDPKLKDGYYMRPCVLTNCRDDMTCVKEEIFGPVMSILSFDTEAEVLERANDTTFGLAAGVFTRDIQRAHRVVAELQAGMCFINNYNVSPVELPFGGYKKSGFGRENGRVTIEYYSQLKTVCVEMGDVESAF.

An N-acetylserine modification is found at S2. K30 carries the N6-acetyllysine; alternate modification. K30 carries the N6-succinyllysine; alternate modification. Residue K59 is modified to N6-succinyllysine. Residues K180 and 232 to 236 (GSVPT) contribute to the NAD(+) site. E254 functions as the Proton acceptor in the catalytic mechanism. The Nucleophile role is filled by C288. An N6-acetyllysine mark is found at K298 and K344. E391 lines the NAD(+) pocket.

The protein belongs to the aldehyde dehydrogenase family. As to quaternary structure, homotetramer.

The protein localises to the cytoplasm. The protein resides in the cytosol. It carries out the reaction 4-(trimethylamino)butanal + NAD(+) + H2O = 4-(trimethylamino)butanoate + NADH + 2 H(+). The catalysed reaction is an aldehyde + NAD(+) + H2O = a carboxylate + NADH + 2 H(+). It catalyses the reaction 4-aminobutanal + NAD(+) + H2O = 4-aminobutanoate + NADH + 2 H(+). The enzyme catalyses formaldehyde + NAD(+) + H2O = formate + NADH + 2 H(+). It carries out the reaction acetaldehyde + NAD(+) + H2O = acetate + NADH + 2 H(+). The catalysed reaction is imidazole-4-acetaldehyde + NAD(+) + H2O = imidazole-4-acetate + NADH + 2 H(+). It catalyses the reaction acrolein + NAD(+) + H2O = acrylate + NADH + 2 H(+). The enzyme catalyses (5-hydroxyindol-3-yl)acetaldehyde + NAD(+) + H2O = (5-hydroxyindol-3-yl)acetate + NADH + 2 H(+). It carries out the reaction 3,4-dihydroxyphenylacetaldehyde + NAD(+) + H2O = 3,4-dihydroxyphenylacetate + NADH + 2 H(+). The catalysed reaction is spermine monoaldehyde + NAD(+) + H2O = N-(2-carboxyethyl)spermidine + NADH + 2 H(+). It catalyses the reaction propanal + NAD(+) + H2O = propanoate + NADH + 2 H(+). The enzyme catalyses butanal + NAD(+) + H2O = butanoate + NADH + 2 H(+). It carries out the reaction pentanal + NAD(+) + H2O = pentanoate + NADH + 2 H(+). The catalysed reaction is hexanal + NAD(+) + H2O = hexanoate + NADH + 2 H(+). It participates in amine and polyamine biosynthesis; carnitine biosynthesis. Functionally, converts gamma-trimethylaminobutyraldehyde into gamma-butyrobetaine with high efficiency (in vitro). Can catalyze the irreversible oxidation of a broad range of aldehydes to the corresponding acids in an NAD-dependent reaction, but with low efficiency. Catalyzes the oxidation of aldehydes arising from biogenic amines and polyamines. This Bos taurus (Bovine) protein is 4-trimethylaminobutyraldehyde dehydrogenase (ALDH9A1).